A 141-amino-acid polypeptide reads, in one-letter code: Hemoglobin subunit alpha (141 aa).

The 141-residue stretch at 1-141 folds into the Globin domain; that stretch reads VLSEADKSNV…VSTVLTSKYR (141 aa). An O2-binding site is contributed by histidine 58. Histidine 87 contacts heme b.

This sequence belongs to the globin family. As to quaternary structure, heterotetramer of two alpha chains and two beta chains. When oxygenated in vitro, exists virtually only in polymeric form. When deoxygenated, forms tetramers, octamers and larger polymers. Red blood cells.

In terms of biological role, involved in oxygen transport from the lung to the various peripheral tissues. The sequence is that of Hemoglobin subunit alpha from Paleosuchus palpebrosus (Cuvier's smooth-fronted caiman).